Consider the following 477-residue polypeptide: Trigger factor (477 aa).

One can recognise a PPIase FKBP-type domain in the interval 169 to 254 (EDRVTIDYLG…VKEVAKPNEL (86 aa)). The disordered stretch occupies residues 435–477 (VSKEELTAEDEDAASEAKPAKKAAPKKKAAPKKKADEGKSEEA). Residues 454–466 (AKKAAPKKKAAPK) are compositionally biased toward basic residues. Over residues 467–477 (KKADEGKSEEA) the composition is skewed to basic and acidic residues.

This sequence belongs to the FKBP-type PPIase family. Tig subfamily.

It localises to the cytoplasm. It carries out the reaction [protein]-peptidylproline (omega=180) = [protein]-peptidylproline (omega=0). Functionally, involved in protein export. Acts as a chaperone by maintaining the newly synthesized protein in an open conformation. Functions as a peptidyl-prolyl cis-trans isomerase. In Brucella anthropi (strain ATCC 49188 / DSM 6882 / CCUG 24695 / JCM 21032 / LMG 3331 / NBRC 15819 / NCTC 12168 / Alc 37) (Ochrobactrum anthropi), this protein is Trigger factor.